The primary structure comprises 227 residues: Esterase OVCA2 (227 aa).

A disordered region spans residues glycine 44–glutamate 68. Residues serine 119, aspartate 179, and histidine 206 each act as charge relay system in the active site.

It belongs to the LovG family. Proteolytically degraded in response to RA and 4HPR treatment in a time- and dose-dependent manner in the promyelocytic leukemia cell line HL-60. As to expression, ubiquitously expressed.

It carries out the reaction a carboxylic ester + H2O = an alcohol + a carboxylate + H(+). In terms of biological role, exhibits ester hydrolase activity with a strong preference for long-chain alkyl ester substrates and high selectivity against a variety of short, branched, and substituted esters. Is able to hydrolyze ester bonds within a wide range of p-nitrophenyl derivatives (C2-C14) in vitro, with a strong preference toward substrates of &gt;8 carbons. This Homo sapiens (Human) protein is Esterase OVCA2.